The sequence spans 97 residues: Large ribosomal subunit protein uL23 (97 aa).

This sequence belongs to the universal ribosomal protein uL23 family. Part of the 50S ribosomal subunit. Contacts protein L29, and trigger factor when it is bound to the ribosome.

Its function is as follows. One of the early assembly proteins it binds 23S rRNA. One of the proteins that surrounds the polypeptide exit tunnel on the outside of the ribosome. Forms the main docking site for trigger factor binding to the ribosome. The chain is Large ribosomal subunit protein uL23 from Brucella canis (strain ATCC 23365 / NCTC 10854 / RM-666).